Here is a 161-residue protein sequence, read N- to C-terminus: Phosphopantetheine adenylyltransferase (161 aa).

Thr-10 contributes to the substrate binding site. ATP contacts are provided by residues 10 to 11 (TF) and His-18. Residues Lys-42, Leu-74, and Arg-88 each contribute to the substrate site. Residues 89-91 (GIR), Glu-99, and 124-130 (WRYLSST) contribute to the ATP site.

Belongs to the bacterial CoaD family. As to quaternary structure, homohexamer. Mg(2+) serves as cofactor.

The protein localises to the cytoplasm. The catalysed reaction is (R)-4'-phosphopantetheine + ATP + H(+) = 3'-dephospho-CoA + diphosphate. Its pathway is cofactor biosynthesis; coenzyme A biosynthesis; CoA from (R)-pantothenate: step 4/5. Functionally, reversibly transfers an adenylyl group from ATP to 4'-phosphopantetheine, yielding dephospho-CoA (dPCoA) and pyrophosphate. The chain is Phosphopantetheine adenylyltransferase from Haemophilus ducreyi (strain 35000HP / ATCC 700724).